A 363-amino-acid polypeptide reads, in one-letter code: Peptide chain release factor 2 (363 aa).

Q251 carries the N5-methylglutamine modification.

The protein belongs to the prokaryotic/mitochondrial release factor family. Methylated by PrmC. Methylation increases the termination efficiency of RF2.

The protein localises to the cytoplasm. In terms of biological role, peptide chain release factor 2 directs the termination of translation in response to the peptide chain termination codons UGA and UAA. This chain is Peptide chain release factor 2, found in Helicobacter pylori (strain G27).